The sequence spans 164 residues: Large ribosomal subunit protein uL10 (164 aa).

Belongs to the universal ribosomal protein uL10 family. Part of the ribosomal stalk of the 50S ribosomal subunit. The N-terminus interacts with L11 and the large rRNA to form the base of the stalk. The C-terminus forms an elongated spine to which L12 dimers bind in a sequential fashion forming a multimeric L10(L12)X complex.

In terms of biological role, forms part of the ribosomal stalk, playing a central role in the interaction of the ribosome with GTP-bound translation factors. In Photobacterium profundum (strain SS9), this protein is Large ribosomal subunit protein uL10.